Consider the following 167-residue polypeptide: MNIRQQLTKFLGLFLTLASAFMFWKGLSVVTNSHSPIVVVLSGSMEPAFQRGDILFLWNRERFNKVGDVIVYEVDAKSIPIVHRVVREHRDKNGRQLLLTKGDNNAADDIALYGRKQSYLRRDKDIVGTVKGYLPKLGYVTILVSENQYAKFALMGMLALSSLLGSE.

The Cytoplasmic segment spans residues 1 to 6; that stretch reads MNIRQQ. Residues 7-24 form a helical; Signal-anchor for type II membrane protein membrane-spanning segment; the sequence is LTKFLGLFLTLASAFMFW. The Lumenal portion of the chain corresponds to 25-167; sequence KGLSVVTNSH…LALSSLLGSE (143 aa). Catalysis depends on charge relay system residues Ser-44, His-83, and Asp-109. The segment at 153–164 is C-terminal short (CTS) helix; it reads ALMGMLALSSLL.

The protein belongs to the peptidase S26B family. Component of the signal peptidase complex (SPC) composed of a catalytic subunit SEC11 and three accessory subunits SPC1, SPC2 and SPC3. The complex induces a local thinning of the ER membrane which is used to measure the length of the signal peptide (SP) h-region of protein substrates. This ensures the selectivity of the complex towards h-regions shorter than 18-20 amino acids. SPC associates with the translocon complex.

Its subcellular location is the endoplasmic reticulum membrane. It carries out the reaction Cleavage of hydrophobic, N-terminal signal or leader sequences from secreted and periplasmic proteins.. Functionally, catalytic component of the signal peptidase complex (SPC) which catalyzes the cleavage of N-terminal signal sequences from nascent proteins as they are translocated into the lumen of the endoplasmic reticulum. Specifically cleaves N-terminal signal peptides that contain a hydrophobic alpha-helix (h-region) shorter than 18-20 amino acids. The chain is Signal peptidase complex catalytic subunit SEC11 (SEC11) from Eremothecium gossypii (strain ATCC 10895 / CBS 109.51 / FGSC 9923 / NRRL Y-1056) (Yeast).